The following is a 471-amino-acid chain: V-type ATP synthase beta chain (471 aa).

This sequence belongs to the ATPase alpha/beta chains family.

Produces ATP from ADP in the presence of a proton gradient across the membrane. The V-type beta chain is a regulatory subunit. This is V-type ATP synthase beta chain from Deinococcus deserti (strain DSM 17065 / CIP 109153 / LMG 22923 / VCD115).